Reading from the N-terminus, the 351-residue chain is Uroporphyrinogen decarboxylase (351 aa).

Residues 25-29 (RQAGR), aspartate 74, tyrosine 151, serine 206, and histidine 325 contribute to the substrate site.

This sequence belongs to the uroporphyrinogen decarboxylase family. In terms of assembly, homodimer.

Its subcellular location is the cytoplasm. The enzyme catalyses uroporphyrinogen III + 4 H(+) = coproporphyrinogen III + 4 CO2. It functions in the pathway porphyrin-containing compound metabolism; protoporphyrin-IX biosynthesis; coproporphyrinogen-III from 5-aminolevulinate: step 4/4. Functionally, catalyzes the decarboxylation of four acetate groups of uroporphyrinogen-III to yield coproporphyrinogen-III. The chain is Uroporphyrinogen decarboxylase from Chlorobium phaeovibrioides (strain DSM 265 / 1930) (Prosthecochloris vibrioformis (strain DSM 265)).